The chain runs to 1423 residues: Histone-lysine N-methyltransferase ATXR7 (1423 aa).

A GYF domain is found at 263–312 (HACWFLVDGEGRNHGPHSILELFSWQQHGYVSDAALIRDGENKLRPITLA). Disordered regions lie at residues 923–960 (CKDHEESLSNKPSQKVKKAHTSKLKRKNLSDARDEGTK), 1057–1097 (CSIS…SSTD), and 1115–1158 (LPCH…GRPK). Residues 936–949 (QKVKKAHTSKLKRK) show a composition bias toward basic residues. The segment covering 950-959 (NLSDARDEGT) has biased composition (basic and acidic residues). The span at 1057–1071 (CSISQKGRKSSQSSI) shows a compositional bias: polar residues. Composition is skewed to basic and acidic residues over residues 1115–1124 (LPCHTSDKLQ) and 1140–1157 (HTTERSPIKDLSVDDGRP). Residues 1266 to 1383 (KHLRFQQSKI…AGEEISYNYK (118 aa)) form the SET domain. Residue Tyr-1382 coordinates S-adenosyl-L-methionine.

The protein belongs to the class V-like SAM-binding methyltransferase superfamily. Histone-lysine methyltransferase family. TRX/MLL subfamily. In terms of tissue distribution, expressed in the shoot and root apices, vascular tissues and mesophyll cells of rosette leaves.

Its subcellular location is the nucleus. The enzyme catalyses L-lysyl(4)-[histone H3] + 3 S-adenosyl-L-methionine = N(6),N(6),N(6)-trimethyl-L-lysyl(4)-[histone H3] + 3 S-adenosyl-L-homocysteine + 3 H(+). It catalyses the reaction L-lysyl(36)-[histone H3] + 2 S-adenosyl-L-methionine = N(6),N(6)-dimethyl-L-lysyl(36)-[histone H3] + 2 S-adenosyl-L-homocysteine + 2 H(+). Its function is as follows. Histone methyltransferase involved in regulation of flowering time. Required for the expression of the flowering repressors FLC and MADS-box genes of the MAF family. Required for histone H3 dimethylation on 'Lys-36' H3K36me2 at the FLC locus. Required for histone H3 trimethylation on 'Lys-4' (H3K4me3) at the FLC locus. Prevents trimethylation on 'Lys-27' (H3K27me3) at the same locus. Involved in the control of seed dormancy and germination. This is Histone-lysine N-methyltransferase ATXR7 from Arabidopsis thaliana (Mouse-ear cress).